We begin with the raw amino-acid sequence, 100 residues long: Urease subunit gamma (100 aa).

The protein belongs to the urease gamma subunit family. As to quaternary structure, heterotrimer of UreA (gamma), UreB (beta) and UreC (alpha) subunits. Three heterotrimers associate to form the active enzyme.

It is found in the cytoplasm. It carries out the reaction urea + 2 H2O + H(+) = hydrogencarbonate + 2 NH4(+). It participates in nitrogen metabolism; urea degradation; CO(2) and NH(3) from urea (urease route): step 1/1. This is Urease subunit gamma from Granulibacter bethesdensis (strain ATCC BAA-1260 / CGDNIH1).